Reading from the N-terminus, the 331-residue chain is Adenosine deaminase (331 aa).

2 residues coordinate Zn(2+): H12 and H14. H14, D16, and G170 together coordinate substrate. Zn(2+) is bound at residue H197. The active-site Proton donor is E200. D278 contributes to the Zn(2+) binding site.

The protein belongs to the metallo-dependent hydrolases superfamily. Adenosine and AMP deaminases family. Adenosine deaminase subfamily. Zn(2+) serves as cofactor.

It catalyses the reaction adenosine + H2O + H(+) = inosine + NH4(+). The catalysed reaction is 2'-deoxyadenosine + H2O + H(+) = 2'-deoxyinosine + NH4(+). Catalyzes the hydrolytic deamination of adenosine and 2-deoxyadenosine. The protein is Adenosine deaminase of Vibrio vulnificus (strain YJ016).